The following is a 339-amino-acid chain: Ketol-acid reductoisomerase (NADP(+)) (339 aa).

Positions 1–182 (MRVYYDSDAD…GGGRAGIIET (182 aa)) constitute a KARI N-terminal Rossmann domain. NADP(+) is bound by residues 24-27 (YGSQ), Arg-48, Ser-51, and 83-86 (DEGQ). His-108 is an active-site residue. Gly-134 provides a ligand contact to NADP(+). The KARI C-terminal knotted domain occupies 183–328 (TFKEECETDL…EKLRAMMPWI (146 aa)). Asp-191, Glu-195, Glu-227, and Glu-231 together coordinate Mg(2+). Ser-252 is a binding site for substrate.

Belongs to the ketol-acid reductoisomerase family. It depends on Mg(2+) as a cofactor.

The catalysed reaction is (2R)-2,3-dihydroxy-3-methylbutanoate + NADP(+) = (2S)-2-acetolactate + NADPH + H(+). It catalyses the reaction (2R,3R)-2,3-dihydroxy-3-methylpentanoate + NADP(+) = (S)-2-ethyl-2-hydroxy-3-oxobutanoate + NADPH + H(+). It participates in amino-acid biosynthesis; L-isoleucine biosynthesis; L-isoleucine from 2-oxobutanoate: step 2/4. The protein operates within amino-acid biosynthesis; L-valine biosynthesis; L-valine from pyruvate: step 2/4. In terms of biological role, involved in the biosynthesis of branched-chain amino acids (BCAA). Catalyzes an alkyl-migration followed by a ketol-acid reduction of (S)-2-acetolactate (S2AL) to yield (R)-2,3-dihydroxy-isovalerate. In the isomerase reaction, S2AL is rearranged via a Mg-dependent methyl migration to produce 3-hydroxy-3-methyl-2-ketobutyrate (HMKB). In the reductase reaction, this 2-ketoacid undergoes a metal-dependent reduction by NADPH to yield (R)-2,3-dihydroxy-isovalerate. The polypeptide is Ketol-acid reductoisomerase (NADP(+)) (Acidiphilium cryptum (strain JF-5)).